The primary structure comprises 67 residues: UPF0435 protein SSP0913 (67 aa).

It belongs to the UPF0435 family.

In Staphylococcus saprophyticus subsp. saprophyticus (strain ATCC 15305 / DSM 20229 / NCIMB 8711 / NCTC 7292 / S-41), this protein is UPF0435 protein SSP0913.